A 201-amino-acid chain; its full sequence is LexA repressor (201 aa).

Residues 29–49 (VREICKAVGLSSTSSVHFHLK) constitute a DNA-binding region (H-T-H motif). Catalysis depends on for autocatalytic cleavage activity residues S125 and K162.

The protein belongs to the peptidase S24 family. In terms of assembly, homodimer.

It catalyses the reaction Hydrolysis of Ala-|-Gly bond in repressor LexA.. Functionally, represses a number of genes involved in the response to DNA damage (SOS response), including recA and lexA. In the presence of single-stranded DNA, RecA interacts with LexA causing an autocatalytic cleavage which disrupts the DNA-binding part of LexA, leading to derepression of the SOS regulon and eventually DNA repair. The protein is LexA repressor of Clostridium botulinum (strain 657 / Type Ba4).